The following is a 167-amino-acid chain: uncharacterized protein (167 aa).

Belongs to the A.longa ORF167/ORF288 family.

It is found in the plastid. This is an uncharacterized protein from Euglena longa (Euglenophycean alga).